A 987-amino-acid polypeptide reads, in one-letter code: VPS35 endosomal protein sorting factor-like (987 aa).

A compositionally biased stretch (low complexity) spans 1 to 23 (MAERQSASSPTPSSPPQQQQQTP). The tract at residues 1–115 (MAERQSASSP…DPLNNPLEKK (115 aa)) is disordered. The span at 43–63 (NGREVERHPLNSITKTEDTGK) shows a compositional bias: basic and acidic residues. Positions 66 to 111 (QSSLSSNASSLQSAAAAASSSTATTDIDPLNNNNNNNTDIDPLNNP) are enriched in low complexity.

The protein belongs to the VPS35L family. As to quaternary structure, component of the heterotrimeric retriever complex.

It localises to the endosome. In terms of biological role, acts as a component of the retriever complex. The retriever complex is a heterotrimeric complex related to retromer cargo-selective complex (CSC) and essential for retromer-independent retrieval and recycling of numerous cargos. This Dictyostelium discoideum (Social amoeba) protein is VPS35 endosomal protein sorting factor-like.